Consider the following 640-residue polypeptide: Probable serine/threonine-protein kinase samkA (640 aa).

Positions 21–84 constitute an SAM domain; it reads WNNEKIIKWL…SEFEILKNNY (64 aa). Residues 73-100 adopt a coiled-coil conformation; it reads FKSEFEILKNNYDNNNNNNNNNNNNNNN. Residues 84 to 165 are disordered; it reads YDNNNNNNNN…INFNSNSNIT (82 aa). Residues 191 to 437 form the Protein kinase domain; the sequence is YEYVESISLG…SKDLQKLSWF (247 aa). Residues 197–205 and lysine 221 each bind ATP; that span reads ISLGVFSVV. Aspartate 312 acts as the Proton acceptor in catalysis. Residues 448 to 482 are disordered; the sequence is QELTKSTTNTTTTTTTTTTPPPPPSPSSSSPSMNE. Over residues 453–465 the composition is skewed to low complexity; that stretch reads STTNTTTTTTTTT.

The protein belongs to the protein kinase superfamily. Ser/Thr protein kinase family.

The enzyme catalyses L-seryl-[protein] + ATP = O-phospho-L-seryl-[protein] + ADP + H(+). It carries out the reaction L-threonyl-[protein] + ATP = O-phospho-L-threonyl-[protein] + ADP + H(+). The sequence is that of Probable serine/threonine-protein kinase samkA (samkA) from Dictyostelium discoideum (Social amoeba).